A 560-amino-acid chain; its full sequence is Putative protease Do-like 11, mitochondrial (560 aa).

Residues 1-65 (MFFRPCVHTV…RRSSTSAAER (65 aa)) constitute a mitochondrion transit peptide. A serine protease region spans residues 117–302 (TEYSKSKPWK…ESRQYSCFGS (186 aa)). Residues histidine 150, aspartate 184, and serine 258 each act as charge relay system in the active site. One can recognise a PDZ domain in the interval 288 to 384 (ITSVQESRQY…YLVSMKKPGE (97 aa)).

It belongs to the peptidase S1C family.

It is found in the mitochondrion membrane. Functionally, putative serine protease. The sequence is that of Putative protease Do-like 11, mitochondrial (DEGP11) from Arabidopsis thaliana (Mouse-ear cress).